The primary structure comprises 643 residues: COP9 signalosome complex subunit 10 (643 aa).

Positions 1–33 (MTDESDNYNDFMMSDEDMDSIEMEDEENDVEGD) are enriched in acidic residues. Positions 1 to 37 (MTDESDNYNDFMMSDEDMDSIEMEDEENDVEGDEGQR) are disordered. In terms of domain architecture, PCI spans 331-517 (CKEEFWECLK…DTVTFYSEQH (187 aa)). The span at 573–584 (DSQSHSKSNTKS) shows a compositional bias: polar residues. The disordered stretch occupies residues 573–594 (DSQSHSKSNTKSMSRHVSGHDP).

In terms of assembly, component of a COP9 signalosome-like (CSN) complex.

The protein localises to the cytoplasm. The protein resides in the nucleus. Functionally, component of the COP9 signalosome (CSN) complex that acts as an regulator of the ubiquitin (Ubl) conjugation pathway by mediating the deneddylation of the cullin subunit of SCF-type E3 ubiquitin-protein ligase complexes. The CSN complex is involved in the regulation of the mating pheromone response. The chain is COP9 signalosome complex subunit 10 (RRI2) from Candida glabrata (strain ATCC 2001 / BCRC 20586 / JCM 3761 / NBRC 0622 / NRRL Y-65 / CBS 138) (Yeast).